A 593-amino-acid polypeptide reads, in one-letter code: MSVSLSFAASATFGFRGGLGGFSRPAAAIKQWRCLPRIQCHSAEQSQSPLRRSGNYQPSIWTHDRIQSLTLSHTADEDDHGERIKLLKCQTNKLMEEKKGEVGEQLQLIDHLQQLGVAYHFKDEIKDTLRGFYASFEDISLQFKDNLHASALLFRLLRENGFSVSEDIFKKFKDDQKGQFEDRLQSQAEGLLSLYEASYLEKDGEELLHEAREFTTKHLKNLLEEEGSLKPGLIREQVAYALELPLNRRFQRLHTKWFIGAWQRDPTMDPALLLLAKLDFNALQNMYKRELNEVSRWWTDLGLPQKLPFFRDRLTENYLWAVVFAFEPDSWAFREMDTKTNCFITMIDDVYDVYGTLDELELFTDIMERWDVNAIDKLPEYMKICFLAVFNTVNDAGYEVMRDKGVNIIPYLKRAWAELCKMYMREARWYHTGYTPTLDEYLDGAWISISGALILSTAYCMGKDLTKEDLDKFSTYPSIVQPSCMLLRLHDDFGTSTEELARGDVQKAVQCCMHERKVPEAVAREHIKQVMEAKWRVLNGNRVAASSFEEYFQNVAINLPRAAQFFYGKGDGYANADGETQKQVMSLLIEPVQ.

The N-terminal 39 residues, 1–39 (MSVSLSFAASATFGFRGGLGGFSRPAAAIKQWRCLPRIQ), are a transit peptide targeting the chloroplast. Mg(2+)-binding residues include Asp-348, Asp-352, Asp-491, and Glu-499. The DDXXD motif signature appears at 348 to 352 (DDVYD).

This sequence belongs to the terpene synthase family. Tpsa subfamily. Mg(2+) is required as a cofactor. The cofactor is Mn(2+). As to expression, highly expressed in flowers, petals and sepals, but almost undetectable in vegetative organs.

Its subcellular location is the plastid. It localises to the chloroplast. It carries out the reaction (2E)-geranyl diphosphate = sabinene + diphosphate. It catalyses the reaction (2E)-geranyl diphosphate = terpinolene + diphosphate. The catalysed reaction is (2E)-geranyl diphosphate = alpha-pinene + diphosphate. The enzyme catalyses (2E)-geranyl diphosphate = beta-pinene + diphosphate. It carries out the reaction (2E)-geranyl diphosphate = beta-myrcene + diphosphate. It catalyses the reaction (2E)-geranyl diphosphate = alpha-terpinene + diphosphate. The catalysed reaction is (2E)-geranyl diphosphate = beta-phellandrene + diphosphate. The enzyme catalyses (2E)-geranyl diphosphate = gamma-terpinene + diphosphate. It functions in the pathway secondary metabolite biosynthesis; terpenoid biosynthesis. Monoterpene synthase involved in the biosynthesis of volatile compounds present in floral scent. Mediates the conversion of (2E)-geranyl diphosphate (GPP) into sabinene and sub-products such as alpha-thujene, alpha-pinene, beta-pinene, myrcene, alpha-phellandrene, alpha-terpinene, beta-phellandrene, gamma-terpinene and terpinolene. Unable to use farnesyl diphosphate (FPP) as substrate. This is Monoterpene synthase 7, chloroplastic from Hedychium coronarium (White butterfly ginger-lily).